Here is a 304-residue protein sequence, read N- to C-terminus: Non-specific ribonucleoside hydrolase RihC (304 aa).

Residue histidine 233 is part of the active site.

It belongs to the IUNH family. RihC subfamily.

Functionally, hydrolyzes both purine and pyrimidine ribonucleosides with a broad-substrate specificity. The sequence is that of Non-specific ribonucleoside hydrolase RihC from Escherichia fergusonii (strain ATCC 35469 / DSM 13698 / CCUG 18766 / IAM 14443 / JCM 21226 / LMG 7866 / NBRC 102419 / NCTC 12128 / CDC 0568-73).